The following is a 1643-amino-acid chain: Lysine-specific demethylase 6B (1643 aa).

Disordered stretches follow at residues glycine 52–glycine 88, alanine 190–aspartate 680, glutamate 704–leucine 807, and glycine 822–serine 1096. 2 stretches are compositionally biased toward low complexity: residues serine 63–proline 74 and alanine 212–leucine 223. A Phosphoserine modification is found at serine 224. Residues proline 242–proline 266 are compositionally biased toward pro residues. Positions glycine 291–histidine 307 are enriched in basic and acidic residues. Residues alanine 332–proline 342 are compositionally biased toward pro residues. The span at aspartate 359 to methionine 370 shows a compositional bias: basic and acidic residues. The segment covering proline 394–glycine 412 has biased composition (low complexity). Positions serine 460–alanine 484 are enriched in pro residues. Low complexity predominate over residues threonine 550 to valine 569. Pro residues-rich tracts occupy residues leucine 584 to valine 600 and glycine 641 to proline 658. Residues glutamate 704–glutamine 714 are compositionally biased toward basic and acidic residues. The segment covering threonine 740–threonine 764 has biased composition (low complexity). The span at proline 772–proline 800 shows a compositional bias: pro residues. The segment covering serine 843 to proline 877 has biased composition (low complexity). Positions valine 889–leucine 904 are enriched in pro residues. The segment covering glutamate 916–glycine 929 has biased composition (basic and acidic residues). Over residues cysteine 972–alanine 989 the composition is skewed to basic residues. A compositionally biased stretch (basic and acidic residues) spans cysteine 990 to alanine 1003. The segment covering lysine 1004–arginine 1016 has biased composition (basic residues). The span at proline 1047–alanine 1067 shows a compositional bias: pro residues. Lysine 1109 is covalently cross-linked (Glycyl lysine isopeptide (Lys-Gly) (interchain with G-Cter in SUMO2)). A disordered region spans residues phenylalanine 1288–isoleucine 1325. The segment covering lysine 1296–aspartate 1307 has biased composition (acidic residues). The JmjC domain maps to arginine 1339–tryptophan 1502. The Fe cation site is built by histidine 1390, glutamate 1392, and histidine 1470. Cysteine 1575, cysteine 1578, cysteine 1602, and cysteine 1605 together coordinate Zn(2+).

It belongs to the UTX family. Interacts with TLE1. Component of the MLL4 complex, at least composed of KMT2B/MLL4, ASH2L, RBBP5, WDR5, and KDM6B. Interacts with TBX21, SMARCA4, SMARCC1 and SMARCC2. It depends on L-ascorbate as a cofactor. The cofactor is Fe(2+).

Its subcellular location is the nucleus. The enzyme catalyses N(6),N(6),N(6)-trimethyl-L-lysyl(27)-[histone H3] + 2 2-oxoglutarate + 2 O2 = N(6)-methyl-L-lysyl(27)-[histone H3] + 2 formaldehyde + 2 succinate + 2 CO2. Histone demethylase that specifically demethylates 'Lys-27' of histone H3, thereby playing a central role in histone code. Demethylates trimethylated and dimethylated H3 'Lys-27'. Plays a central role in regulation of posterior development, by regulating HOX gene expression. Involved in inflammatory response by participating in macrophage differentiation in case of inflammation by regulating gene expression and macrophage differentiation. Plays a demethylase-independent role in chromatin remodeling to regulate T-box family member-dependent gene expression by acting as a link between T-box factors and the SMARCA4-containing SWI/SNF remodeling complex. The polypeptide is Lysine-specific demethylase 6B (KDM6B) (Homo sapiens (Human)).